An 83-amino-acid chain; its full sequence is Small ribosomal subunit protein bS16 (83 aa).

It belongs to the bacterial ribosomal protein bS16 family.

This Acinetobacter baumannii (strain AB307-0294) protein is Small ribosomal subunit protein bS16.